Consider the following 209-residue polypeptide: Ribosomal RNA large subunit methyltransferase E (209 aa).

S-adenosyl-L-methionine contacts are provided by G63, W65, D83, D99, and D124. The active-site Proton acceptor is K164.

This sequence belongs to the class I-like SAM-binding methyltransferase superfamily. RNA methyltransferase RlmE family.

Its subcellular location is the cytoplasm. The catalysed reaction is uridine(2552) in 23S rRNA + S-adenosyl-L-methionine = 2'-O-methyluridine(2552) in 23S rRNA + S-adenosyl-L-homocysteine + H(+). Its function is as follows. Specifically methylates the uridine in position 2552 of 23S rRNA at the 2'-O position of the ribose in the fully assembled 50S ribosomal subunit. The protein is Ribosomal RNA large subunit methyltransferase E of Shewanella piezotolerans (strain WP3 / JCM 13877).